The primary structure comprises 565 residues: Oxygen-dependent choline dehydrogenase (565 aa).

7 to 36 (DYIICGAGSAGNVLATRLTEDPGVTVLLLE) is a binding site for FAD. The Proton acceptor role is filled by His-474.

The protein belongs to the GMC oxidoreductase family. The cofactor is FAD.

The enzyme catalyses choline + A = betaine aldehyde + AH2. It catalyses the reaction betaine aldehyde + NAD(+) + H2O = glycine betaine + NADH + 2 H(+). Its pathway is amine and polyamine biosynthesis; betaine biosynthesis via choline pathway; betaine aldehyde from choline (cytochrome c reductase route): step 1/1. Functionally, involved in the biosynthesis of the osmoprotectant glycine betaine. Catalyzes the oxidation of choline to betaine aldehyde and betaine aldehyde to glycine betaine at the same rate. In Burkholderia pseudomallei (strain K96243), this protein is Oxygen-dependent choline dehydrogenase.